The sequence spans 613 residues: Zinc metalloproteinase-disintegrin-like atragin (613 aa).

The N-terminal stretch at 1-20 (MIQALLVIICLAVFPHQGSS) is a signal peptide. Residues 21–191 (IILESGNVND…DESIEKTSQL (171 aa)) constitute a propeptide that is removed on maturation. One can recognise a Peptidase M12B domain in the interval 205-400 (KYIEFYVVVD…DRPQCILNKP (196 aa)). Ca(2+) is bound by residues Glu-208 and Asp-292. 2 disulfide bridges follow: Cys-316/Cys-395 and Cys-356/Cys-379. Residues His-341, His-345, and His-351 each coordinate Zn(2+). Ca(2+)-binding residues include Cys-395, Asn-398, Ile-410, Asn-413, Phe-415, Glu-417, Glu-420, and Asp-423. The Disintegrin domain maps to 408–494 (PPICGNYFVE…ECPTDVFQRN (87 aa)). Disulfide bonds link Cys-411/Cys-440, Cys-422/Cys-435, Cys-424/Cys-430, Cys-434/Cys-457, Cys-448/Cys-454, Cys-453/Cys-479, Cys-466/Cys-486, Cys-473/Cys-505, Cys-498/Cys-510, Cys-517/Cys-567, Cys-532/Cys-575, Cys-542/Cys-577, Cys-545/Cys-555, Cys-562/Cys-601, and Cys-595/Cys-606. Asn-436 carries N-linked (GlcNAc...) asparagine glycosylation. A D/ECD-tripeptide motif is present at residues 472-474 (DCD). Positions 474, 475, 477, 489, and 490 each coordinate Ca(2+). Positions 560–574 (VKCGRLFCKRRNSMI) are hypervariable region that may play important roles toward cell migration.

This sequence belongs to the venom metalloproteinase (M12B) family. P-III subfamily. P-IIIa sub-subfamily. Monomer. Zn(2+) serves as cofactor. As to expression, expressed by the venom gland.

The protein resides in the secreted. In terms of biological role, snake venom zinc metalloproteinase that seems to inhibit cell migration. This activity is dominated by the local structure of the hyper-variable region. This chain is Zinc metalloproteinase-disintegrin-like atragin, found in Naja atra (Chinese cobra).